Here is a 148-residue protein sequence, read N- to C-terminus: uncharacterized protein (148 aa).

Positions 1–20 are cleaved as a signal peptide; sequence MNLTKLLPAFAAAVVLSACA.

This is an uncharacterized protein from Haemophilus influenzae (strain ATCC 51907 / DSM 11121 / KW20 / Rd).